A 552-amino-acid polypeptide reads, in one-letter code: Dihydroxy-acid dehydratase (552 aa).

Asp78 contributes to the Mg(2+) binding site. Residue Cys119 participates in [2Fe-2S] cluster binding. Asp120 and Lys121 together coordinate Mg(2+). Lys121 is subject to N6-carboxylysine. Residue Cys190 coordinates [2Fe-2S] cluster. Glu441 contributes to the Mg(2+) binding site. Ser467 acts as the Proton acceptor in catalysis.

This sequence belongs to the IlvD/Edd family. In terms of assembly, homodimer. [2Fe-2S] cluster serves as cofactor. The cofactor is Mg(2+).

It carries out the reaction (2R)-2,3-dihydroxy-3-methylbutanoate = 3-methyl-2-oxobutanoate + H2O. The catalysed reaction is (2R,3R)-2,3-dihydroxy-3-methylpentanoate = (S)-3-methyl-2-oxopentanoate + H2O. The protein operates within amino-acid biosynthesis; L-isoleucine biosynthesis; L-isoleucine from 2-oxobutanoate: step 3/4. Its pathway is amino-acid biosynthesis; L-valine biosynthesis; L-valine from pyruvate: step 3/4. In terms of biological role, functions in the biosynthesis of branched-chain amino acids. Catalyzes the dehydration of (2R,3R)-2,3-dihydroxy-3-methylpentanoate (2,3-dihydroxy-3-methylvalerate) into 2-oxo-3-methylpentanoate (2-oxo-3-methylvalerate) and of (2R)-2,3-dihydroxy-3-methylbutanoate (2,3-dihydroxyisovalerate) into 2-oxo-3-methylbutanoate (2-oxoisovalerate), the penultimate precursor to L-isoleucine and L-valine, respectively. The polypeptide is Dihydroxy-acid dehydratase (Ignicoccus hospitalis (strain KIN4/I / DSM 18386 / JCM 14125)).